The primary structure comprises 246 residues: 7-cyano-7-deazaguanine synthase (246 aa).

Position 24 to 34 (24 to 34 (FSGGLDSTTVL)) interacts with ATP. Positions 209, 219, 222, and 225 each coordinate Zn(2+).

This sequence belongs to the QueC family. It depends on Zn(2+) as a cofactor.

The enzyme catalyses 7-carboxy-7-deazaguanine + NH4(+) + ATP = 7-cyano-7-deazaguanine + ADP + phosphate + H2O + H(+). The protein operates within purine metabolism; 7-cyano-7-deazaguanine biosynthesis. In terms of biological role, catalyzes the ATP-dependent conversion of 7-carboxy-7-deazaguanine (CDG) to 7-cyano-7-deazaguanine (preQ(0)). This is 7-cyano-7-deazaguanine synthase from Polynucleobacter asymbioticus (strain DSM 18221 / CIP 109841 / QLW-P1DMWA-1) (Polynucleobacter necessarius subsp. asymbioticus).